Consider the following 501-residue polypeptide: L-arabinose isomerase (501 aa).

Residues Glu307, Glu334, His351, and His450 each contribute to the Mn(2+) site.

Belongs to the arabinose isomerase family. It depends on Mn(2+) as a cofactor.

It catalyses the reaction beta-L-arabinopyranose = L-ribulose. It participates in carbohydrate degradation; L-arabinose degradation via L-ribulose; D-xylulose 5-phosphate from L-arabinose (bacterial route): step 1/3. Catalyzes the conversion of L-arabinose to L-ribulose. This Acidothermus cellulolyticus (strain ATCC 43068 / DSM 8971 / 11B) protein is L-arabinose isomerase.